The primary structure comprises 612 residues: Elongation factor 4 (612 aa).

One can recognise a tr-type G domain in the interval 11-193 (KHIRNFAIVA…KVVKDIPAPS (183 aa)). GTP is bound by residues 23–28 (DHGKST) and 140–143 (NKID).

It belongs to the TRAFAC class translation factor GTPase superfamily. Classic translation factor GTPase family. LepA subfamily.

The protein resides in the cell membrane. The enzyme catalyses GTP + H2O = GDP + phosphate + H(+). Functionally, required for accurate and efficient protein synthesis under certain stress conditions. May act as a fidelity factor of the translation reaction, by catalyzing a one-codon backward translocation of tRNAs on improperly translocated ribosomes. Back-translocation proceeds from a post-translocation (POST) complex to a pre-translocation (PRE) complex, thus giving elongation factor G a second chance to translocate the tRNAs correctly. Binds to ribosomes in a GTP-dependent manner. The protein is Elongation factor 4 of Lactobacillus helveticus (strain DPC 4571).